A 186-amino-acid chain; its full sequence is Elongation factor P (186 aa).

This sequence belongs to the elongation factor P family.

It is found in the cytoplasm. Its pathway is protein biosynthesis; polypeptide chain elongation. Functionally, involved in peptide bond synthesis. Stimulates efficient translation and peptide-bond synthesis on native or reconstituted 70S ribosomes in vitro. Probably functions indirectly by altering the affinity of the ribosome for aminoacyl-tRNA, thus increasing their reactivity as acceptors for peptidyl transferase. This Cupriavidus pinatubonensis (strain JMP 134 / LMG 1197) (Cupriavidus necator (strain JMP 134)) protein is Elongation factor P.